Consider the following 189-residue polypeptide: Ribosome maturation factor RimM (189 aa).

The PRC barrel domain occupies 95-169 (DEDEFFQTDL…IIKVEPHAAG (75 aa)). The disordered stretch occupies residues 168–189 (AGLIADEHDNPPHESGKKPKKP). Over residues 172-189 (ADEHDNPPHESGKKPKKP) the composition is skewed to basic and acidic residues.

This sequence belongs to the RimM family. In terms of assembly, binds ribosomal protein uS19.

The protein resides in the cytoplasm. An accessory protein needed during the final step in the assembly of 30S ribosomal subunit, possibly for assembly of the head region. Essential for efficient processing of 16S rRNA. May be needed both before and after RbfA during the maturation of 16S rRNA. It has affinity for free ribosomal 30S subunits but not for 70S ribosomes. This Brucella abortus (strain S19) protein is Ribosome maturation factor RimM.